We begin with the raw amino-acid sequence, 486 residues long: MKKLLHLFFPLSLRVRFLLATAAVVLVLSLAYGMVALIGYSVSFDKTTFRLLRGESNLFYTLAKWENNKLHVELPENIDKQSPTMTLIYDENGQLLWAQRDVPWLMKMIQPDWLKSNGFHEIEADVNDTSLLLSGDHSIQQQLQEVREDDDDAEMTHSVAVNVYPATSRMPKLTIVVVDTIPVELKSSYMVWSWFIYVLSANLLLVIPLLWVAAWWSLRPIEALAKEVRELEEHNRELLNPATTRELTSLVRNLNRLLKSERERYDKYRTTLTDLTHSLKTPLAVLQSTLRSLRSEKMSVSDAEPVMLEQISRISQQIGYYLHRASMRGGTLLSRELHPVAPLLDNLTSALNKVYQRKGVNISLDISPEISFVGEQNDFVEVMGNVLDNACKYCLEFVEISARQTDEHLYIVVEDDGPGIPLSKREVIFDRGQRVDTLRPGQGVGLAVAREITEQYEGKIVAGESMLGGARMEVIFGRQHSAPKDE.

Residues 1–16 (MKKLLHLFFPLSLRVR) are Cytoplasmic-facing. The helical transmembrane segment at 17-37 (FLLATAAVVLVLSLAYGMVAL) threads the bilayer. Residues 38 to 194 (IGYSVSFDKT…LKSSYMVWSW (157 aa)) lie on the Periplasmic side of the membrane. Positions 151 and 152 each coordinate a divalent metal cation. Residues 195-215 (FIYVLSANLLLVIPLLWVAAW) form a helical membrane-spanning segment. The HAMP domain maps to 215–266 (WWSLRPIEALAKEVRELEEHNRELLNPATTRELTSLVRNLNRLLKSERERYD). Over 216–486 (WSLRPIEALA…GRQHSAPKDE (271 aa)) the chain is Cytoplasmic. Positions 274–480 (DLTHSLKTPL…RMEVIFGRQH (207 aa)) constitute a Histidine kinase domain. Residue His-277 is modified to Phosphohistidine; by autocatalysis. Asn-385 contributes to the Mg(2+) binding site. ATP is bound by residues 385-393 (NVLDNACKY), 415-420 (DDGPGI), and 434-446 (RVDT…GVGL). Gln-442 serves as a coordination point for Mg(2+).

As to quaternary structure, homodimer.

The protein localises to the cell inner membrane. It catalyses the reaction ATP + protein L-histidine = ADP + protein N-phospho-L-histidine.. Member of the two-component regulatory system PhoP/PhoQ involved in virulence, adaptation to low Mg(2+) environments and the control of acid resistance genes. In low periplasmic Mg(2+), PhoQ functions as a membrane-associated protein kinase that undergoes autophosphorylation and subsequently transfers the phosphate to PhoP, resulting in the expression of PhoP-activated genes (PAG) and repression of PhoP-repressed genes (PRG). In high periplasmic Mg(2+), acts as a protein phosphatase that dephosphorylates phospho-PhoP, which results in the repression of PG and may lead to expression of some PRG. This is Sensor protein PhoQ (phoQ) from Escherichia coli O6:H1 (strain CFT073 / ATCC 700928 / UPEC).